A 629-amino-acid polypeptide reads, in one-letter code: MNLATNRALLKPFTQAEFPTLEAAAHPHVPAHLMPEYWQAANRHLVKKILCEFTHEKIISPQIYRQAAGINHYELRLKDCTYYFSARHYQLDHLEIEAGSIRVSSAGQDKPLDAMSLIIKLKDALGMSETLLPTYLEEITSTLYSKAYKLAHQAIPATTLAKADYQTIEAGMTEGHPVFIANNGRIGFDMQDYDQFAPESASALQLVWIAVRKDKTTFSSLEGLDHDSLLKQELGEQFTKFQQHLSALGQAADSFYFMPVHPWQWREKIARTFAGEIARGDIIYLGESQDCYQVQQSIRTFFNLSAPQKCYVKTALSILNMGFMRGLSPLYMSCTPQINAWVADLIESDSYFAEQGFVILKEIAAIGYHHRYYEEALTQDSAYKKMLSALWRESPLPHIEPQQTLMTMAALLHVDHQEQALLAALIKHSGLSAKEWVKRYLNLYLSPLLHAFFAYDLVFMPHGENLILVLDAGIPVKILMKDIGEEVAVLNGSEPLPQEVQRLAVELEEEMKLNYILLDIFDCIFRYLAPILDKQTEVSEAQFWELVADNVRDYQAQHPQLADKFAQYDLFKDSFVRTCLNRIQLNNNQQMIDLADREKNLRFAGGIDNPLAAFRQSHAFGNQKLKPKS.

The protein belongs to the IucA/IucC family. As to quaternary structure, homodimer.

It catalyses the reaction 2 N-(3-carboxypropanoyl)-N-hydroxyputrescine + 2 ATP = putrebactin + 2 AMP + 2 diphosphate + 2 H(+). It carries out the reaction 2 N-(3-carboxypropanoyl)-N-hydroxyputrescine + ATP = pre-putrebactin + AMP + diphosphate + H(+). The enzyme catalyses pre-putrebactin + ATP = putrebactin + AMP + diphosphate + H(+). Its pathway is siderophore biosynthesis. Its activity is regulated as follows. Requires Mg(2+) for activity. In terms of biological role, ligase involved in the biosynthesis of the siderophore putrebactin. Catalyzes the ATP-dependent head-to-tail dimerization of N-hydroxy-N-succinyl-putrescine (HSP) to give pre-putrebactin and subsequent macrocyclization of pre-putrebactin to give putrebactin. The chain is Putrebactin synthase from Shewanella sp. (strain MR-4).